The primary structure comprises 304 residues: Tyrosine recombinase XerC (304 aa).

The region spanning 6-92 (NKLYLQAQAY…VLRQWFAYLV (87 aa)) is the Core-binding (CB) domain. A Tyr recombinase domain is found at 113–292 (HLPKNIDAER…DFQHLAKIYD (180 aa)). Residues Arg-152, Lys-176, His-244, Arg-247, and His-270 contribute to the active site. The O-(3'-phospho-DNA)-tyrosine intermediate role is filled by Tyr-279.

This sequence belongs to the 'phage' integrase family. XerC subfamily. As to quaternary structure, forms a cyclic heterotetrameric complex composed of two molecules of XerC and two molecules of XerD.

The protein localises to the cytoplasm. Its function is as follows. Site-specific tyrosine recombinase, which acts by catalyzing the cutting and rejoining of the recombining DNA molecules. The XerC-XerD complex is essential to convert dimers of the bacterial chromosome into monomers to permit their segregation at cell division. It also contributes to the segregational stability of plasmids. This Haemophilus ducreyi (strain 35000HP / ATCC 700724) protein is Tyrosine recombinase XerC.